A 155-amino-acid chain; its full sequence is 2-C-methyl-D-erythritol 2,4-cyclodiphosphate synthase (155 aa).

A divalent metal cation-binding residues include Asp-8 and His-10. Residues 8-10 and 34-35 contribute to the 4-CDP-2-C-methyl-D-erythritol 2-phosphate site; these read DVH and HS. A divalent metal cation is bound at residue His-42. Residues 56–58, 61–65, 100–106, 132–135, Phe-139, and Lys-142 each bind 4-CDP-2-C-methyl-D-erythritol 2-phosphate; these read DIG, FPDSD, AQKPKML, and TTEE.

Belongs to the IspF family. As to quaternary structure, homotrimer. A divalent metal cation serves as cofactor.

It carries out the reaction 4-CDP-2-C-methyl-D-erythritol 2-phosphate = 2-C-methyl-D-erythritol 2,4-cyclic diphosphate + CMP. The protein operates within isoprenoid biosynthesis; isopentenyl diphosphate biosynthesis via DXP pathway; isopentenyl diphosphate from 1-deoxy-D-xylulose 5-phosphate: step 4/6. Functionally, involved in the biosynthesis of isopentenyl diphosphate (IPP) and dimethylallyl diphosphate (DMAPP), two major building blocks of isoprenoid compounds. Catalyzes the conversion of 4-diphosphocytidyl-2-C-methyl-D-erythritol 2-phosphate (CDP-ME2P) to 2-C-methyl-D-erythritol 2,4-cyclodiphosphate (ME-CPP) with a corresponding release of cytidine 5-monophosphate (CMP). The sequence is that of 2-C-methyl-D-erythritol 2,4-cyclodiphosphate synthase from Clostridium botulinum (strain ATCC 19397 / Type A).